The chain runs to 56 residues: UPF0434 protein CBUD_1597.1 (56 aa).

Belongs to the UPF0434 family.

This chain is UPF0434 protein CBUD_1597.1, found in Coxiella burnetii (strain Dugway 5J108-111).